The sequence spans 139 residues: MSAVRPLRPERQAQKQARGAAARLSGRRAEVLAALWLMAKGYRILGFRLATPLGEIDLLAQRRGVLAVVEVKSRTSLEAALEAVTYEQRSRLRRAGAHIAANRAGLRDAVVRLDLIALAPGRRPRHLLNAWPNTGNDGQ.

Belongs to the UPF0102 family.

The protein is UPF0102 protein Caul_0175 of Caulobacter sp. (strain K31).